Here is a 638-residue protein sequence, read N- to C-terminus: Threonine--tRNA ligase (638 aa).

In terms of domain architecture, TGS spans 1-61 (MVAITLPDGK…DRDVNLSIIT (61 aa)). Positions 244–536 (DHRRLGREME…LIENFAGRFP (293 aa)) are catalytic. Positions 336, 387, and 513 each coordinate Zn(2+).

Belongs to the class-II aminoacyl-tRNA synthetase family. Homodimer. It depends on Zn(2+) as a cofactor.

The protein localises to the cytoplasm. The catalysed reaction is tRNA(Thr) + L-threonine + ATP = L-threonyl-tRNA(Thr) + AMP + diphosphate + H(+). In terms of biological role, catalyzes the attachment of threonine to tRNA(Thr) in a two-step reaction: L-threonine is first activated by ATP to form Thr-AMP and then transferred to the acceptor end of tRNA(Thr). Also edits incorrectly charged L-seryl-tRNA(Thr). In Paramagnetospirillum magneticum (strain ATCC 700264 / AMB-1) (Magnetospirillum magneticum), this protein is Threonine--tRNA ligase.